Consider the following 103-residue polypeptide: Large ribosomal subunit protein bL21 (103 aa).

The protein belongs to the bacterial ribosomal protein bL21 family. As to quaternary structure, part of the 50S ribosomal subunit. Contacts protein L20.

Functionally, this protein binds to 23S rRNA in the presence of protein L20. This chain is Large ribosomal subunit protein bL21, found in Pseudomonas syringae pv. syringae (strain B728a).